Here is an 86-residue protein sequence, read N- to C-terminus: UPF0457 protein SSP0714 (86 aa).

This sequence belongs to the UPF0457 family.

In Staphylococcus saprophyticus subsp. saprophyticus (strain ATCC 15305 / DSM 20229 / NCIMB 8711 / NCTC 7292 / S-41), this protein is UPF0457 protein SSP0714.